Consider the following 116-residue polypeptide: U11-theraphotoxin-Hhn1c (116 aa).

A signal peptide spans 1–21; sequence MNTVRVTFLLVFVLAVSLGQA. The propeptide occupies 22-74; that stretch reads DKDENRMEMQEKTEQGKSYLDFAENLLLQKLEELEAKLLEEDSEESRNSRQKR. The interval 61–83 is disordered; sequence EEDSEESRNSRQKRCIGEGVPCD. 3 disulfide bridges follow: Cys75-Cys90, Cys82-Cys95, and Cys89-Cys110.

The protein belongs to the neurotoxin 14 (magi-1) family. 01 (HNTX-16) subfamily. Expressed by the venom gland.

It is found in the secreted. Functionally, probable ion channel inhibitor. In Cyriopagopus hainanus (Chinese bird spider), this protein is U11-theraphotoxin-Hhn1c.